A 526-amino-acid polypeptide reads, in one-letter code: Amino acid transporter heavy chain SLC3A2 (526 aa).

The segment at 1-31 is disordered; the sequence is MSQDTEVDMKDVELNELEPEKQPMNAADGAA. The Cytoplasmic portion of the chain corresponds to 1-75; the sequence is MSQDTEVDMK…AGSPGWVRTR (75 aa). Ser-2 is modified (phosphoserine). Thr-5 is modified (phosphothreonine). Residues 7–21 show a composition bias toward basic and acidic residues; the sequence is VDMKDVELNELEPEK. Lys-42 is covalently cross-linked (Glycyl lysine isopeptide (Lys-Gly) (interchain with G-Cter in ubiquitin)). Ser-58 carries the post-translational modification Phosphoserine. Lys-59 participates in a covalent cross-link: Glycyl lysine isopeptide (Lys-Gly) (interchain with G-Cter in SUMO2). A helical; Signal-anchor for type II membrane protein transmembrane segment spans residues 76-99; the sequence is WALLLLFWLGWLGMLAGAVVIIVR. The Extracellular portion of the chain corresponds to 100–526; that stretch reads APRCRELPVQ…GLLLQFPFVA (427 aa). N-linked (GlcNAc...) asparagine glycosylation is found at Asn-166, Asn-259, and Asn-263. Ser-300 is modified (phosphoserine). N-linked (GlcNAc...) asparagine glycosylation occurs at Asn-301. A Phosphoserine modification is found at Ser-302. Asn-318, Asn-385, and Asn-399 each carry an N-linked (GlcNAc...) asparagine glycan. Ser-420 is subject to Phosphoserine. Asn-509 carries N-linked (GlcNAc...) asparagine glycosylation.

Belongs to the SLC3A transporter family. As to quaternary structure, disulfide-linked heterodimer with a non-glycosylated light chain (SLC7A5, SLC7A6, SLC7A7, SLC7A8, SLC7A10 or SLC7A11). Interacts with TLCD3A/CT120 and ICAM1. Constitutively and specifically associates with beta-1 integrins (alpha-2/beta-1, alpha-3/beta-1, alpha-5/beta-1 and alpha-6/beta-1), but minimally with alpha-4/beta-1. Interacts with LAPTM4B; recruits SLC3A2 and SLC7A5 to lysosomes to promote leucine uptake into these organelles and is required for mTORC1 activation. In terms of processing, phosphorylation on Ser-300 or Ser-302 and on Ser-420 by ecto-protein kinases favors heterotypic cell-cell interactions. Post-translationally, N-glycosylated; N-glycosylation is crucial for trafficking and stability of SLC3A2 to the plasma membrane. As to expression, detected on the surface of embryonic epithelial cells in the epidermis, thymus, kidney, intestine, brain choroid plexus, and in retina. Detected in adult and embryonic brain, spleen, kidney, intestine and liver, and in adult testis (at protein level). Observed in all adult tissues tested with strongest expression in kidney, small intestine, spleen, thymus and liver. Moderate expression in brain, stomach, heart, testis, lung, skin, pancreas and skeletal muscle. In brain expressed on capillary endothelia in cerebral cortex.

It is found in the apical cell membrane. The protein resides in the cell membrane. Its subcellular location is the cell junction. It localises to the lysosome membrane. The protein localises to the melanosome. It is found in the basolateral cell membrane. Its function is as follows. Acts as a chaperone that facilitates biogenesis and trafficking of functional transporters heterodimers to the plasma membrane. Forms heterodimer with SLC7 family transporters (SLC7A5, SLC7A6, SLC7A7, SLC7A8, SLC7A10 and SLC7A11), a group of amino-acid antiporters. Heterodimers function as amino acids exchangers, the specificity of the substrate depending on the SLC7A subunit. Heterodimers SLC3A2/SLC7A6 or SLC3A2/SLC7A7 mediate the uptake of dibasic amino acids. Heterodimer SLC3A2/SLC7A11 functions as an antiporter by mediating the exchange of extracellular anionic L-cystine and intracellular L-glutamate across the cellular plasma membrane. SLC3A2/SLC7A10 translocates small neutral L- and D-amino acids across the plasma membrane. SLC3A2/SLC75 or SLC3A2/SLC7A8 translocates neutral amino acids with broad specificity, thyroid hormones and L-DOPA. SLC3A2 is essential for plasma membrane localization, stability, and the transport activity of SLC7A5 and SLC7A8. When associated with LAPTM4B, the heterodimer SLC7A5 is recruited to lysosomes to promote leucine uptake into these organelles, and thereby mediates mTORC1 activation. Modulates integrin-related signaling and is essential for integrin-dependent cell spreading, migration and tumor progression. This chain is Amino acid transporter heavy chain SLC3A2, found in Mus musculus (Mouse).